The chain runs to 155 residues: 6,7-dimethyl-8-ribityllumazine synthase (155 aa).

Residues phenylalanine 22, 56–58, and 80–82 contribute to the 5-amino-6-(D-ribitylamino)uracil site; these read AFE and AVI. A (2S)-2-hydroxy-3-oxobutyl phosphate-binding site is contributed by 85–86; sequence ST. Histidine 88 serves as the catalytic Proton donor. A 5-amino-6-(D-ribitylamino)uracil-binding site is contributed by phenylalanine 113. Residue arginine 127 coordinates (2S)-2-hydroxy-3-oxobutyl phosphate.

The protein belongs to the DMRL synthase family.

It catalyses the reaction (2S)-2-hydroxy-3-oxobutyl phosphate + 5-amino-6-(D-ribitylamino)uracil = 6,7-dimethyl-8-(1-D-ribityl)lumazine + phosphate + 2 H2O + H(+). It participates in cofactor biosynthesis; riboflavin biosynthesis; riboflavin from 2-hydroxy-3-oxobutyl phosphate and 5-amino-6-(D-ribitylamino)uracil: step 1/2. In terms of biological role, catalyzes the formation of 6,7-dimethyl-8-ribityllumazine by condensation of 5-amino-6-(D-ribitylamino)uracil with 3,4-dihydroxy-2-butanone 4-phosphate. This is the penultimate step in the biosynthesis of riboflavin. In Bifidobacterium longum subsp. infantis (strain ATCC 15697 / DSM 20088 / JCM 1222 / NCTC 11817 / S12), this protein is 6,7-dimethyl-8-ribityllumazine synthase.